The primary structure comprises 156 residues: Small ribosomal subunit protein uS7 (156 aa).

Belongs to the universal ribosomal protein uS7 family. Part of the 30S ribosomal subunit. Contacts proteins S9 and S11.

Functionally, one of the primary rRNA binding proteins, it binds directly to 16S rRNA where it nucleates assembly of the head domain of the 30S subunit. Is located at the subunit interface close to the decoding center, probably blocks exit of the E-site tRNA. This Chromohalobacter salexigens (strain ATCC BAA-138 / DSM 3043 / CIP 106854 / NCIMB 13768 / 1H11) protein is Small ribosomal subunit protein uS7.